Here is a 117-residue protein sequence, read N- to C-terminus: Basic phospholipase A2 pseudexin B chain (117 aa).

7 disulfide bridges follow: cysteine 11–cysteine 71, cysteine 27–cysteine 117, cysteine 29–cysteine 45, cysteine 44–cysteine 98, cysteine 51–cysteine 91, cysteine 60–cysteine 84, and cysteine 78–cysteine 89. Positions 28, 30, and 32 each coordinate Ca(2+). Histidine 48 is a catalytic residue. Aspartate 49 serves as a coordination point for Ca(2+). Aspartate 92 is an active-site residue.

This sequence belongs to the phospholipase A2 family. Group I subfamily. D49 sub-subfamily. Ca(2+) is required as a cofactor. In terms of tissue distribution, expressed by the venom gland.

The protein resides in the secreted. The enzyme catalyses a 1,2-diacyl-sn-glycero-3-phosphocholine + H2O = a 1-acyl-sn-glycero-3-phosphocholine + a fatty acid + H(+). PLA2 catalyzes the calcium-dependent hydrolysis of the 2-acyl groups in 3-sn-phosphoglycerides. The chain is Basic phospholipase A2 pseudexin B chain from Pseudechis porphyriacus (Red-bellied black snake).